The following is a 370-amino-acid chain: DNA repair protein RAD51 homolog 2 (370 aa).

An ATP-binding site is contributed by 109 to 116 (GPPGIGKS).

It belongs to the RecA family. RAD51 subfamily. Preferentially expressed in flower buds and roots.

It localises to the nucleus. Its function is as follows. May be involved in the homologous recombination repair (HRR) pathway of double-stranded DNA breaks arising during DNA replication or induced by DNA-damaging agents. The sequence is that of DNA repair protein RAD51 homolog 2 (RAD51B) from Arabidopsis thaliana (Mouse-ear cress).